The primary structure comprises 156 residues: Myosin regulatory light chain B, smooth adductor muscle (156 aa).

Blocked amino end (Ala) is present on A1. EF-hand domains follow at residues K15–T50 and D84–N119. Residues D28, N30, D32, and D39 each contribute to the Ca(2+) site.

In molluscan muscle, calcium regulation is associated with myosin rather than with actin. Muscle myosin contains two types of light chains: the catalytic light chain, essential for ATPase activity, and the regulatory light chain, a calcium-binding protein responsible for Ca(2+) dependent binding and Ca(2+) dependent Mg-ATPase activity. The chain is Myosin regulatory light chain B, smooth adductor muscle from Mizuhopecten yessoensis (Japanese scallop).